The primary structure comprises 103 residues: Large ribosomal subunit protein uL24 (103 aa).

It belongs to the universal ribosomal protein uL24 family. In terms of assembly, part of the 50S ribosomal subunit.

Functionally, one of two assembly initiator proteins, it binds directly to the 5'-end of the 23S rRNA, where it nucleates assembly of the 50S subunit. Its function is as follows. One of the proteins that surrounds the polypeptide exit tunnel on the outside of the subunit. The protein is Large ribosomal subunit protein uL24 of Histophilus somni (strain 129Pt) (Haemophilus somnus).